Consider the following 354-residue polypeptide: Ferrochelatase (354 aa).

The Fe cation site is built by histidine 204 and glutamate 306.

It belongs to the ferrochelatase family.

The protein localises to the cytoplasm. The enzyme catalyses heme b + 2 H(+) = protoporphyrin IX + Fe(2+). The protein operates within porphyrin-containing compound metabolism; protoheme biosynthesis; protoheme from protoporphyrin-IX: step 1/1. Functionally, catalyzes the ferrous insertion into protoporphyrin IX. This Coxiella burnetii (strain RSA 493 / Nine Mile phase I) protein is Ferrochelatase.